A 338-amino-acid polypeptide reads, in one-letter code: uncharacterized protein (338 aa).

This is an uncharacterized protein from Bacillus subtilis (strain 168).